A 393-amino-acid chain; its full sequence is Triacylglycerol lipase 1 (393 aa).

The first 20 residues, 1–20, serve as a signal peptide directing secretion; sequence MKWLLVAVLTSLTIFSALTQ. A glycan (N-linked (GlcNAc...) asparagine) is linked at asparagine 41. Serine 166 acts as the Nucleophile in catalysis. Asparagine 261 is a glycosylation site (N-linked (GlcNAc...) asparagine). Active-site charge relay system residues include aspartate 334 and histidine 363.

Belongs to the AB hydrolase superfamily. Lipase family. In terms of tissue distribution, expressed in seedlings, roots, leaves, flowers and siliques. Specifically expressed in the epidermis.

The protein resides in the secreted. The catalysed reaction is a triacylglycerol + H2O = a diacylglycerol + a fatty acid + H(+). The enzyme catalyses 1,2,3-tributanoylglycerol + H2O = dibutanoylglycerol + butanoate + H(+). It catalyses the reaction 1,2,3-trioctanoylglycerol + H2O = dioctanoylglycerol + octanoate + H(+). It functions in the pathway lipid metabolism; glycerolipid metabolism. In terms of biological role, triacylglycerol (TAG) lipase active on triolein, trioctanoin, tributyrin and 1,3-Diolein, but not on phospho- and galactolipids. Involved but dispensable for TAG storage breakdown during seed germination. The chain is Triacylglycerol lipase 1 from Arabidopsis thaliana (Mouse-ear cress).